A 360-amino-acid chain; its full sequence is Nodulin-44 (360 aa).

A signal peptide spans 1–23 (MEEKILMRVIVITVFLFIGAATA). Disordered stretches follow at residues 123–148 (FSPR…VIPL) and 228–249 (FSPR…TLGR).

This sequence belongs to the nodulin 20 family.

This chain is Nodulin-44, found in Glycine max (Soybean).